The sequence spans 100 residues: MHLSPQEKDKLLIFSAALLAERRLNRGLKLNYPESIAFLSFQVLEGARDGKSVSQLMSEGTTWLSKSQVMEGIPEMVHEVQIEAVFPDGTKLVTIHNPIN.

Belongs to the urease gamma subunit family. As to quaternary structure, heterotrimer of UreA (gamma), UreB (beta) and UreC (alpha) subunits. Three heterotrimers associate to form the active enzyme.

Its subcellular location is the cytoplasm. It catalyses the reaction urea + 2 H2O + H(+) = hydrogencarbonate + 2 NH4(+). It participates in nitrogen metabolism; urea degradation; CO(2) and NH(3) from urea (urease route): step 1/1. In Prochlorococcus marinus (strain MIT 9312), this protein is Urease subunit gamma.